Consider the following 385-residue polypeptide: Succinate--CoA ligase [ADP-forming] subunit beta (385 aa).

The ATP-grasp domain occupies 9–244 (KEVLRKYGVS…LDEEDPKEIE (236 aa)). ATP contacts are provided by residues Lys46, 53–55 (GRG), Glu99, Cys102, and Glu107. Mg(2+)-binding residues include Asn199 and Asp213. Substrate is bound by residues Asn264 and 321–323 (GIM).

This sequence belongs to the succinate/malate CoA ligase beta subunit family. In terms of assembly, heterotetramer of two alpha and two beta subunits. Mg(2+) is required as a cofactor.

It catalyses the reaction succinate + ATP + CoA = succinyl-CoA + ADP + phosphate. The catalysed reaction is GTP + succinate + CoA = succinyl-CoA + GDP + phosphate. It participates in carbohydrate metabolism; tricarboxylic acid cycle; succinate from succinyl-CoA (ligase route): step 1/1. Succinyl-CoA synthetase functions in the citric acid cycle (TCA), coupling the hydrolysis of succinyl-CoA to the synthesis of either ATP or GTP and thus represents the only step of substrate-level phosphorylation in the TCA. The beta subunit provides nucleotide specificity of the enzyme and binds the substrate succinate, while the binding sites for coenzyme A and phosphate are found in the alpha subunit. This Bacillus velezensis (strain DSM 23117 / BGSC 10A6 / LMG 26770 / FZB42) (Bacillus amyloliquefaciens subsp. plantarum) protein is Succinate--CoA ligase [ADP-forming] subunit beta.